We begin with the raw amino-acid sequence, 183 residues long: Inosine triphosphate pyrophosphatase (183 aa).

8 to 13 (TGNKNK) lines the ITP pocket. Glu-36 is a Mg(2+) binding site. Residues Lys-48, 64-65 (DT), Lys-81, 140-143 (FGWD), Lys-161, and 166-167 (HR) contribute to the ITP site.

It belongs to the HAM1 NTPase family. In terms of assembly, homodimer. Mg(2+) serves as cofactor. Mn(2+) is required as a cofactor.

It is found in the cytoplasm. The protein localises to the nucleus. It carries out the reaction ITP + H2O = IMP + diphosphate + H(+). It catalyses the reaction dITP + H2O = dIMP + diphosphate + H(+). The catalysed reaction is XTP + H2O = XMP + diphosphate + H(+). Pyrophosphatase that hydrolyzes non-canonical purine nucleotides such as inosine triphosphate (ITP), deoxyinosine triphosphate (dITP) or xanthosine 5'-triphosphate (XTP) to their respective monophosphate derivatives. The enzyme does not distinguish between the deoxy- and ribose forms. Probably excludes non-canonical purines from RNA and DNA precursor pools, thus preventing their incorporation into RNA and DNA and avoiding chromosomal lesions. This is Inosine triphosphate pyrophosphatase from Emericella nidulans (strain FGSC A4 / ATCC 38163 / CBS 112.46 / NRRL 194 / M139) (Aspergillus nidulans).